The following is a 228-amino-acid chain: uncharacterized protein (228 aa).

The first 15 residues, 1–15 (MKQKYLFIASMALAG), serve as a signal peptide directing secretion. Cys-16 carries the N-palmitoyl cysteine lipid modification. Cys-16 carries S-diacylglycerol cysteine lipidation.

This sequence to P.multocida PM0015.

The protein localises to the cell membrane. This is an uncharacterized protein from Pasteurella multocida (strain Pm70).